The chain runs to 372 residues: PqqA peptide cyclase (372 aa).

The region spanning 4 to 220 is the Radical SAM core domain; the sequence is APPPLSVLLE…ETARRQLGDR (217 aa). 3 residues coordinate [4Fe-4S] cluster: Cys18, Cys22, and Cys25.

This sequence belongs to the radical SAM superfamily. PqqE family. Interacts with PqqD. The interaction is necessary for activity of PqqE. [4Fe-4S] cluster is required as a cofactor.

It carries out the reaction [PQQ precursor protein] + S-adenosyl-L-methionine = E-Y cross-linked-[PQQ precursor protein] + 5'-deoxyadenosine + L-methionine + H(+). It participates in cofactor biosynthesis; pyrroloquinoline quinone biosynthesis. Catalyzes the cross-linking of a glutamate residue and a tyrosine residue in the PqqA protein as part of the biosynthesis of pyrroloquinoline quinone (PQQ). This chain is PqqA peptide cyclase, found in Xanthomonas axonopodis pv. citri (strain 306).